Consider the following 75-residue polypeptide: Antitoxin MT0312 (75 aa).

Antitoxin component of a type II toxin-antitoxin (TA) system. The polypeptide is Antitoxin MT0312 (Mycobacterium tuberculosis (strain CDC 1551 / Oshkosh)).